We begin with the raw amino-acid sequence, 317 residues long: Melanocyte-stimulating hormone receptor (317 aa).

Residues 1-37 (MPALGSPRRLLGSLNCTPPATLPLTLAPNRTGPQCLE) are Extracellular-facing. An N-linked (GlcNAc...) asparagine glycan is attached at asparagine 29. The helical transmembrane segment at 38 to 63 (VSIPDGLFLSLGLVSLVENVLVVAAI) threads the bilayer. Topologically, residues 64–72 (AKNRNLHSP) are cytoplasmic. A helical transmembrane segment spans residues 73–93 (MYYFICCLAMSDLLVSVSNVL). At 94–118 (ETAVMLLLEAGVLATRAAVVQQLDN) the chain is on the extracellular side. Residues 119–140 (VIDVLICSSMVSSLCFLGAIAV) traverse the membrane as a helical segment. Over 141-163 (DRYISIFYALRYHSVVTLPRAWR) the chain is Cytoplasmic. The helical transmembrane segment at 164 to 183 (IIAAIWVASILTSVLSITYY) threads the bilayer. Residues 184 to 191 (NHTVVLLC) lie on the Extracellular side of the membrane. The helical transmembrane segment at 192-211 (LVGFFIAMLALMAVLYVHML) threads the bilayer. Residues 212–240 (ARACQHARGIARLQKRQRPIHQGFGLKGA) lie on the Cytoplasmic side of the membrane. Residues 241–266 (ATLTILLGVFFLCWGPFFLHLSLIVL) form a helical membrane-spanning segment. Residues 267 to 279 (CPQHPTCGCIFKN) lie on the Extracellular side of the membrane. Residues 280–300 (FNLFLALIICNAIVDPLIYAF) form a helical membrane-spanning segment. The Cytoplasmic portion of the chain corresponds to 301–317 (RSQELRKTLQEVLQCSW). Residue cysteine 315 is the site of S-palmitoyl cysteine attachment.

Belongs to the G-protein coupled receptor 1 family. As to quaternary structure, interacts with MGRN1, but does not undergo MGRN1-mediated ubiquitination; this interaction competes with GNAS-binding and thus inhibits agonist-induced cAMP production. Interacts with OPN3; the interaction results in a decrease in MC1R-mediated cAMP signaling and ultimately a decrease in melanin production in melanocytes.

It localises to the cell membrane. Receptor for MSH (alpha, beta and gamma) and ACTH. The activity of this receptor is mediated by G proteins which activate adenylate cyclase. Mediates melanogenesis, the production of eumelanin (black/brown) and phaeomelanin (red/yellow), via regulation of cAMP signaling in melanocytes. The protein is Melanocyte-stimulating hormone receptor (MC1R) of Capra hircus (Goat).